A 175-amino-acid polypeptide reads, in one-letter code: Large ribosomal subunit protein uL10 (175 aa).

Belongs to the universal ribosomal protein uL10 family. In terms of assembly, part of the ribosomal stalk of the 50S ribosomal subunit. The N-terminus interacts with L11 and the large rRNA to form the base of the stalk. The C-terminus forms an elongated spine to which L12 dimers bind in a sequential fashion forming a multimeric L10(L12)X complex.

Its function is as follows. Forms part of the ribosomal stalk, playing a central role in the interaction of the ribosome with GTP-bound translation factors. The sequence is that of Large ribosomal subunit protein uL10 from Mycobacterium sp. (strain KMS).